The sequence spans 140 residues: MAKKEIAKIKLQIQAGAANPSPPVGPALGQHGLNIMEFCKAFNARTQDQKGMVIPVVITAYADRSFTFITKTPPASVLLAKAAKVAKGSGEPNKTKVGSVTMEQVEEIAKLKMPDLSAKDLPGAVKTIAGTARSMGIDVK.

This sequence belongs to the universal ribosomal protein uL11 family. In terms of assembly, part of the ribosomal stalk of the 50S ribosomal subunit. Interacts with L10 and the large rRNA to form the base of the stalk. L10 forms an elongated spine to which L12 dimers bind in a sequential fashion forming a multimeric L10(L12)X complex. One or more lysine residues are methylated.

Functionally, forms part of the ribosomal stalk which helps the ribosome interact with GTP-bound translation factors. The chain is Large ribosomal subunit protein uL11 from Oleidesulfovibrio alaskensis (strain ATCC BAA-1058 / DSM 17464 / G20) (Desulfovibrio alaskensis).